The chain runs to 31 residues: Kallikrein-1 (31 aa).

A Peptidase S1 domain is found at 1–31; the sequence is VIGGQECARDSHPWQAAVYHFSDIECGGVLV.

This sequence belongs to the peptidase S1 family. Kallikrein subfamily.

The catalysed reaction is Preferential cleavage of Arg-|-Xaa bonds in small molecule substrates. Highly selective action to release kallidin (lysyl-bradykinin) from kininogen involves hydrolysis of Met-|-Xaa or Leu-|-Xaa.. Glandular kallikreins cleave Met-Lys and Arg-Ser bonds in kininogen to release Lys-bradykinin. The chain is Kallikrein-1 from Cavia porcellus (Guinea pig).